Reading from the N-terminus, the 235-residue chain is MHLLVATAVSVERDAVARAFPAPGTEVSRPGITLHRLPDGWDLLAAGVGPARAAASTAAALTAAALDGRPYDLVVSAGIGGGFAPEAPVGSLVVADAITAADLGAETADGFLPVTDLGFGTVTHLPPAPLVRAAAEATGARPGTVLTGSTVTGTAARAALLRERHPGALAEAMEGFGVAEAAAAHGVPVLELRAVSNPVGPRDRAAWRIGEALAALTDAVGKLAPVLESWKPHER.

Belongs to the PNP/UDP phosphorylase family. Futalosine hydrolase subfamily.

The catalysed reaction is futalosine + H2O = dehypoxanthine futalosine + hypoxanthine. It participates in quinol/quinone metabolism; menaquinone biosynthesis. Functionally, catalyzes the hydrolysis of futalosine (FL) to dehypoxanthine futalosine (DHFL) and hypoxanthine, a step in the biosynthesis of menaquinone (MK, vitamin K2). Does not accept aminodeoxyfutalosine (AFL) as a substrate. This is Futalosine hydrolase from Streptomyces coelicolor (strain ATCC BAA-471 / A3(2) / M145).